The sequence spans 122 residues: Semaphorin-like protein A43 (122 aa).

In terms of domain architecture, Sema spans 1–122 (MIYLYTADNV…RIMYLFYEYH (122 aa)).

This sequence belongs to the semaphorin family.

In Homo sapiens (Human), this protein is Semaphorin-like protein A43 (A43R).